We begin with the raw amino-acid sequence, 264 residues long: Small ribosomal subunit protein eS1 (264 aa).

Lys-34 carries the N6-acetyllysine; alternate modification. A Glycyl lysine isopeptide (Lys-Gly) (interchain with G-Cter in SUMO2); alternate cross-link involves residue Lys-34. Lys-56 carries the post-translational modification N6-acetyllysine. An ADP-ribosyltyrosine modification is found at Tyr-155. The disordered stretch occupies residues 233–264 (GEGGSSGKAAGDETGAKVERADGYEPPVQESV). Ser-237 is modified (phosphoserine). A compositionally biased stretch (basic and acidic residues) spans 242–255 (AGDETGAKVERADG). An N6-acetyllysine; alternate modification is found at Lys-249. A Glycyl lysine isopeptide (Lys-Gly) (interchain with G-Cter in SUMO2); alternate cross-link involves residue Lys-249. The residue at position 256 (Tyr-256) is a Phosphotyrosine. Ser-263 is modified (phosphoserine).

The protein belongs to the eukaryotic ribosomal protein eS1 family. In terms of assembly, component of the small ribosomal subunit. Mature ribosomes consist of a small (40S) and a large (60S) subunit. The 40S subunit contains about 33 different proteins and 1 molecule of RNA (18S). The 60S subunit contains about 49 different proteins and 3 molecules of RNA (28S, 5.8S and 5S). Identified in a IGF2BP1-dependent mRNP granule complex containing untranslated mRNAs. Binds with high affinity to IPO4. Interacts with DDIT3. Part of the small subunit (SSU) processome, composed of more than 70 proteins and the RNA chaperone small nucleolar RNA (snoRNA) U3. Post-translationally, ADP-ribosylated at Tyr-155 by PARP1 in presence of HPF1.

The protein resides in the cytoplasm. It is found in the nucleus. It localises to the nucleolus. Its function is as follows. Component of the small ribosomal subunit. The ribosome is a large ribonucleoprotein complex responsible for the synthesis of proteins in the cell. Part of the small subunit (SSU) processome, first precursor of the small eukaryotic ribosomal subunit. During the assembly of the SSU processome in the nucleolus, many ribosome biogenesis factors, an RNA chaperone and ribosomal proteins associate with the nascent pre-rRNA and work in concert to generate RNA folding, modifications, rearrangements and cleavage as well as targeted degradation of pre-ribosomal RNA by the RNA exosome. May play a role during erythropoiesis through regulation of transcription factor DDIT3. The sequence is that of Small ribosomal subunit protein eS1 (Rps3a) from Mus musculus (Mouse).